We begin with the raw amino-acid sequence, 715 residues long: Ribosomal RNA large subunit methyltransferase K/L (715 aa).

The region spanning 43-154 (TQYRALLWSR…RDDLVLSLDL (112 aa)) is the THUMP domain.

It belongs to the methyltransferase superfamily. RlmKL family.

Its subcellular location is the cytoplasm. The enzyme catalyses guanosine(2445) in 23S rRNA + S-adenosyl-L-methionine = N(2)-methylguanosine(2445) in 23S rRNA + S-adenosyl-L-homocysteine + H(+). The catalysed reaction is guanosine(2069) in 23S rRNA + S-adenosyl-L-methionine = N(2)-methylguanosine(2069) in 23S rRNA + S-adenosyl-L-homocysteine + H(+). Specifically methylates the guanine in position 2445 (m2G2445) and the guanine in position 2069 (m7G2069) of 23S rRNA. This Mannheimia succiniciproducens (strain KCTC 0769BP / MBEL55E) protein is Ribosomal RNA large subunit methyltransferase K/L.